Reading from the N-terminus, the 278-residue chain is ATP-dependent dethiobiotin synthetase BioD 1 (278 aa).

ATP is bound at residue 51–56 (NVGKTI). T55 contributes to the Mg(2+) binding site. Residue K76 is part of the active site. Residue D102 participates in ATP binding. Mg(2+) is bound by residues D102 and E163. ATP-binding positions include 223-224 (NR) and 252-254 (PYI).

Belongs to the dethiobiotin synthetase family. Homodimer. Mg(2+) is required as a cofactor.

It localises to the cytoplasm. The catalysed reaction is (7R,8S)-7,8-diammoniononanoate + CO2 + ATP = (4R,5S)-dethiobiotin + ADP + phosphate + 3 H(+). It functions in the pathway cofactor biosynthesis; biotin biosynthesis; biotin from 7,8-diaminononanoate: step 1/2. Its function is as follows. Catalyzes a mechanistically unusual reaction, the ATP-dependent insertion of CO2 between the N7 and N8 nitrogen atoms of 7,8-diaminopelargonic acid (DAPA, also called 7,8-diammoniononanoate) to form a ureido ring. In Haemophilus ducreyi (strain 35000HP / ATCC 700724), this protein is ATP-dependent dethiobiotin synthetase BioD 1.